The following is a 329-amino-acid chain: Diaminopimelate epimerase (329 aa).

2 residues coordinate substrate: Asn-14 and Asn-73. Cys-82 (proton donor) is an active-site residue. Residues 83–84 (GN), Asn-170, Asn-206, and 224–225 (ER) contribute to the substrate site. Cys-233 acts as the Proton acceptor in catalysis. 234 to 235 (GT) contacts substrate.

Belongs to the diaminopimelate epimerase family. Homodimer.

It is found in the cytoplasm. The catalysed reaction is (2S,6S)-2,6-diaminopimelate = meso-2,6-diaminopimelate. It functions in the pathway amino-acid biosynthesis; L-lysine biosynthesis via DAP pathway; DL-2,6-diaminopimelate from LL-2,6-diaminopimelate: step 1/1. Its function is as follows. Catalyzes the stereoinversion of LL-2,6-diaminopimelate (L,L-DAP) to meso-diaminopimelate (meso-DAP), a precursor of L-lysine and an essential component of the bacterial peptidoglycan. The sequence is that of Diaminopimelate epimerase from Listeria innocua serovar 6a (strain ATCC BAA-680 / CLIP 11262).